The chain runs to 422 residues: UDP-N-acetylglucosamine 1-carboxyvinyltransferase (422 aa).

Position 22 to 23 (22 to 23) interacts with phosphoenolpyruvate; sequence KN. Position 93 (arginine 93) interacts with UDP-N-acetyl-alpha-D-glucosamine. The active-site Proton donor is the cysteine 117. Residue cysteine 117 is modified to 2-(S-cysteinyl)pyruvic acid O-phosphothioketal. Residues 122 to 126, 162 to 165, aspartate 307, and isoleucine 329 contribute to the UDP-N-acetyl-alpha-D-glucosamine site; these read RPVDL and KVSV.

Belongs to the EPSP synthase family. MurA subfamily.

Its subcellular location is the cytoplasm. It carries out the reaction phosphoenolpyruvate + UDP-N-acetyl-alpha-D-glucosamine = UDP-N-acetyl-3-O-(1-carboxyvinyl)-alpha-D-glucosamine + phosphate. It functions in the pathway cell wall biogenesis; peptidoglycan biosynthesis. Its function is as follows. Cell wall formation. Adds enolpyruvyl to UDP-N-acetylglucosamine. The polypeptide is UDP-N-acetylglucosamine 1-carboxyvinyltransferase (Hamiltonella defensa subsp. Acyrthosiphon pisum (strain 5AT)).